We begin with the raw amino-acid sequence, 98 residues long: Co-chaperonin GroES (98 aa).

It belongs to the GroES chaperonin family. Heptamer of 7 subunits arranged in a ring. Interacts with the chaperonin GroEL.

The protein resides in the cytoplasm. In terms of biological role, together with the chaperonin GroEL, plays an essential role in assisting protein folding. The GroEL-GroES system forms a nano-cage that allows encapsulation of the non-native substrate proteins and provides a physical environment optimized to promote and accelerate protein folding. GroES binds to the apical surface of the GroEL ring, thereby capping the opening of the GroEL channel. The protein is Co-chaperonin GroES of Bartonella bacilliformis (strain ATCC 35685 / KC583 / Herrer 020/F12,63).